The following is a 102-amino-acid chain: Small ribosomal subunit protein uS10 (102 aa).

Belongs to the universal ribosomal protein uS10 family. In terms of assembly, part of the 30S ribosomal subunit.

Its function is as follows. Involved in the binding of tRNA to the ribosomes. The sequence is that of Small ribosomal subunit protein uS10 from Thermosipho melanesiensis (strain DSM 12029 / CIP 104789 / BI429).